Reading from the N-terminus, the 327-residue chain is Malate dehydrogenase (327 aa).

Residue 12-18 (GAAGQIA) participates in NAD(+) binding. 2 residues coordinate substrate: Arg-93 and Arg-99. NAD(+) contacts are provided by residues Asn-106, Gln-113, and 130-132 (VGN). Residues Asn-132 and Arg-163 each coordinate substrate. His-188 functions as the Proton acceptor in the catalytic mechanism.

This sequence belongs to the LDH/MDH superfamily. MDH type 2 family.

The catalysed reaction is (S)-malate + NAD(+) = oxaloacetate + NADH + H(+). In terms of biological role, catalyzes the reversible oxidation of malate to oxaloacetate. This chain is Malate dehydrogenase, found in Burkholderia mallei (strain NCTC 10247).